The sequence spans 727 residues: MTVSENSVLETEVLVGGSAMPNERPGAMEPQNLSKMPEGFPRRSTVANGVRSRASRRFLVVGGALLLSLFAIYEMGAVFSIGGITPLEYLVLALFAVNFCWIALAFCSGIAGFLILLRKPRAKDLQVTELHTRTAILMPTYNESPDRVFSAVSVMAETLSQTGHGHAFDWFILSDTTDPDIALLEEQAFLVLRQETHKHSRVYYRRRRKNVARKAGNVADFCRRWGSRYDHLLVLDADSLMESSTITGLAQRMQADPDAGLIQTIPSLINGTTLMARLQQFAARIYGPVIGTGLGWWVQKEGNFWGHNAIIRTEAFMTAAGLPNLKGKPPFGGHIMSHDFVEAALIRRAGWSVVIAYDLPGSYEECPPSIIDLAVRDRRWCQGNLQHSRILPTKGLHWVSRLHLLTGIMAYLSSPFWLMLILTGLMLALQAHFIRPEYFTDQFSLFPTWPIMDSDRALRLFYITMGVLFGPKIFGVLLLLKDGEFARSVGGRIKAIFSVIFEVILSALIAPIMMFIHCGAVMSILMGRDSGWSPQRRDDGSMPWMTLIYRHRWHMLAGVMLGYAAILDSLTLLAWMSPALIGLWIAVPISAWTGSVKIGEVFKRAGILATPEERNPAQICLQAQDARAAYQKHIAEPWTLAQVLKDPALMELHLAMVDKQPLRAAGTPIEAMEAIVHVKVHEARCQQSALAVLNRQEMAMVLANPLMLRSLQKLPEQFVEEDLVSFC.

Positions 18 to 38 (SAMPNERPGAMEPQNLSKMPE) are disordered. A run of 7 helical transmembrane segments spans residues 58–78 (FLVVGGALLLSLFAIYEMGAV), 97–117 (VNFCWIALAFCSGIAGFLILL), 278–298 (LQQFAARIYGPVIGTGLGWWV), 408–428 (IMAYLSSPFWLMLILTGLMLA), 460–480 (LFYITMGVLFGPKIFGVLLLL), 496–516 (IFSVIFEVILSALIAPIMMFI), and 572–592 (LLAWMSPALIGLWIAVPISAW).

Belongs to the glycosyltransferase 2 family. OpgH subfamily.

It localises to the cell inner membrane. The protein operates within glycan metabolism; osmoregulated periplasmic glucan (OPG) biosynthesis. Its function is as follows. Involved in the biosynthesis of osmoregulated periplasmic glucans (OPGs). The sequence is that of Glucans biosynthesis glucosyltransferase H from Shewanella baltica (strain OS223).